A 350-amino-acid chain; its full sequence is uncharacterized protein (350 aa).

This is an uncharacterized protein from Methanocaldococcus jannaschii (strain ATCC 43067 / DSM 2661 / JAL-1 / JCM 10045 / NBRC 100440) (Methanococcus jannaschii).